A 253-amino-acid polypeptide reads, in one-letter code: Peptidase inhibitor R3HDML (253 aa).

The N-terminal stretch at 1–23 is a signal peptide; that stretch reads MPLLSSIVGLTGLLLWMGHTVGA. A propeptide spanning residues 24–56 is cleaved from the precursor; sequence LRMPNTTLVQGRPKNTAVWPLSGLGVPRHRRKR. Asparagine 28 and asparagine 120 each carry an N-linked (GlcNAc...) asparagine glycan. The region spanning 67-207 is the SCP domain; sequence LDYHNHIRAS…QQAVYLVCNY (141 aa).

The protein belongs to the CRISP family.

It is found in the secreted. In terms of biological role, putative serine protease inhibitor. In Mus musculus (Mouse), this protein is Peptidase inhibitor R3HDML (R3hdml).